The sequence spans 1240 residues: Pectate lyase L (1240 aa).

Residues 1 to 26 (MRNCKGLSILLCFLLVFFAMPFPAVA) form the signal peptide. Has catalytic activity regions lie at residues 27–551 (EEAE…VTVR) and 545–1240 (TLKV…KSIK). Ca(2+) contacts are provided by Asp-325, Glu-349, Asp-350, Asp-1049, Asp-1073, Asp-1074, and Asp-1077. Lys-1117 functions as the Proton acceptor in the catalytic mechanism.

This sequence belongs to the polysaccharide lyase 9 family. Ca(2+) is required as a cofactor.

The protein localises to the secreted. It catalyses the reaction Eliminative cleavage of (1-&gt;4)-alpha-D-galacturonan to give oligosaccharides with 4-deoxy-alpha-D-galact-4-enuronosyl groups at their non-reducing ends.. With respect to regulation, inhibited by the metal chelator ethylenediaminetetraacetic acid (EDTA). Cleaves polygalacturonate or partially methylated pectin. When assayed on polygalacturonate or on pectin, it releases monogalacturonate as the principal product. The protein is Pectate lyase L of Thermoclostridium stercorarium (Clostridium stercorarium).